The primary structure comprises 862 residues: uncharacterized protein (862 aa).

Disordered stretches follow at residues 45 to 91, 633 to 824, and 837 to 862; these read HPPV…PDEV, RAEQ…GDDD, and GGSG…LLLS. Acidic residues-rich tracts occupy residues 57 to 69 and 78 to 91; these read MDVD…EKDE and PEVE…PDEV. Composition is skewed to basic and acidic residues over residues 633-650, 657-686, and 694-703; these read RAEQ…DAAK, REAE…KAEK, and TKKEKTEKKT. The segment covering 751 to 760 has biased composition (basic residues); sequence EKKKRTAAKK. Basic and acidic residues predominate over residues 761–779; that stretch reads KTVDRPSGHRPSSKKEYRS.

This is an uncharacterized protein from Ictaluridae (bullhead catfishes).